A 264-amino-acid chain; its full sequence is tRNA (guanine-N(1)-)-methyltransferase (264 aa).

S-adenosyl-L-methionine-binding positions include Gly125 and 145–150; that span reads LGDFVL.

This sequence belongs to the RNA methyltransferase TrmD family. As to quaternary structure, homodimer.

It localises to the cytoplasm. The enzyme catalyses guanosine(37) in tRNA + S-adenosyl-L-methionine = N(1)-methylguanosine(37) in tRNA + S-adenosyl-L-homocysteine + H(+). Specifically methylates guanosine-37 in various tRNAs. The polypeptide is tRNA (guanine-N(1)-)-methyltransferase (Burkholderia ambifaria (strain MC40-6)).